A 490-amino-acid chain; its full sequence is Bifunctional protein HldE (490 aa).

A ribokinase region spans residues 1–330 (MLDFEAVLPA…RKVLPPASLA (330 aa)). ATP is bound at residue 205–208 (NRKE). D275 is a catalytic residue. The cytidylyltransferase stretch occupies residues 358 to 490 (FTNGCFDILH…LVARAQNGKA (133 aa)).

It in the N-terminal section; belongs to the carbohydrate kinase PfkB family. In the C-terminal section; belongs to the cytidylyltransferase family. Homodimer.

The catalysed reaction is D-glycero-beta-D-manno-heptose 7-phosphate + ATP = D-glycero-beta-D-manno-heptose 1,7-bisphosphate + ADP + H(+). The enzyme catalyses D-glycero-beta-D-manno-heptose 1-phosphate + ATP + H(+) = ADP-D-glycero-beta-D-manno-heptose + diphosphate. It participates in nucleotide-sugar biosynthesis; ADP-L-glycero-beta-D-manno-heptose biosynthesis; ADP-L-glycero-beta-D-manno-heptose from D-glycero-beta-D-manno-heptose 7-phosphate: step 1/4. Its pathway is nucleotide-sugar biosynthesis; ADP-L-glycero-beta-D-manno-heptose biosynthesis; ADP-L-glycero-beta-D-manno-heptose from D-glycero-beta-D-manno-heptose 7-phosphate: step 3/4. In terms of biological role, catalyzes the phosphorylation of D-glycero-D-manno-heptose 7-phosphate at the C-1 position to selectively form D-glycero-beta-D-manno-heptose-1,7-bisphosphate. Its function is as follows. Catalyzes the ADP transfer from ATP to D-glycero-beta-D-manno-heptose 1-phosphate, yielding ADP-D-glycero-beta-D-manno-heptose. The sequence is that of Bifunctional protein HldE from Rhodopseudomonas palustris (strain BisB18).